The following is a 28-amino-acid chain: NLIQLSNMIKCAIPGSRPLFQYTDYGCY.

Residue Tyr28 participates in Ca(2+) binding.

This sequence belongs to the phospholipase A2 family. Group I subfamily. It depends on Ca(2+) as a cofactor. Expressed by the venom gland.

The protein resides in the secreted. It catalyses the reaction a 1,2-diacyl-sn-glycero-3-phosphocholine + H2O = a 1-acyl-sn-glycero-3-phosphocholine + a fatty acid + H(+). Functionally, PLA2 catalyzes the calcium-dependent hydrolysis of the 2-acyl groups in 3-sn-phosphoglycerides. This is Phospholipase A2 pseudexin C chain from Pseudechis porphyriacus (Red-bellied black snake).